The chain runs to 415 residues: WD-40 repeat-containing protein MSI2 (415 aa).

5 WD repeats span residues 166–206, 215–255, 258–298, 302–342, and 361–401; these read GHDK…QDKV, GHES…MQHQ, VHER…APLH, SHEG…EEQL, and GHKA…YRDE. A DWD box motif is present at residues 232–248; that stretch reads LFGSAGEDGRLVIWDTR.

The protein belongs to the WD repeat RBAP46/RBAP48/MSI1 family.

It localises to the nucleus. Its function is as follows. Core histone-binding subunit that may target chromatin assembly factors, chromatin remodeling factors and histone deacetylases to their histone substrates in a manner that is regulated by nucleosomal DNA. The chain is WD-40 repeat-containing protein MSI2 (MSI2) from Arabidopsis thaliana (Mouse-ear cress).